The primary structure comprises 439 residues: CBL-interacting serine/threonine-protein kinase 26 (439 aa).

A Protein kinase domain is found at 13–268; the sequence is YEVGKTLGQG…IPEVLGDAWF (256 aa). Residues 19–27 and Lys42 each bind ATP; that span reads LGQGTFAKV. Catalysis depends on Asp136, which acts as the Proton acceptor. An activation loop region spans residues 154–183; sequence DFGLSALSRQVRGDGLLHTACGTPNYAAPE. Position 158 is a phosphoserine (Ser158). Position 172 is a phosphothreonine (Thr172). The 25-residue stretch at 306–330 folds into the NAF domain; it reads EQPTSMNAFELISMSRALDLGNLFE. Positions 336–365 are PPI; sequence KRETRFAAKGAANDLVQKIEEASKPLGFDI.

The protein belongs to the protein kinase superfamily. CAMK Ser/Thr protein kinase family. SNF1 subfamily. In terms of assembly, interacts with RBOHF (via N-terminus). It depends on Mn(2+) as a cofactor.

It localises to the cell membrane. It catalyses the reaction L-seryl-[protein] + ATP = O-phospho-L-seryl-[protein] + ADP + H(+). It carries out the reaction L-threonyl-[protein] + ATP = O-phospho-L-threonyl-[protein] + ADP + H(+). Functionally, CIPK serine-threonine protein kinases interact with CBL proteins. Binding of a CBL protein to the regulatory NAF domain of CIPK protein lead to the activation of the kinase in a calcium-dependent manner. Involved in the calcium-dependent regulation of reactive oxygen species production by the NADPH oxidase RBOHF. The polypeptide is CBL-interacting serine/threonine-protein kinase 26 (CIPK26) (Arabidopsis thaliana (Mouse-ear cress)).